We begin with the raw amino-acid sequence, 860 residues long: Leucine--tRNA ligase (860 aa).

Positions 42-52 (PYPSGRLHMGH) match the 'HIGH' region motif. Positions 619–623 (KMSKS) match the 'KMSKS' region motif. Residue lysine 622 participates in ATP binding.

It belongs to the class-I aminoacyl-tRNA synthetase family.

Its subcellular location is the cytoplasm. The enzyme catalyses tRNA(Leu) + L-leucine + ATP = L-leucyl-tRNA(Leu) + AMP + diphosphate. This is Leucine--tRNA ligase from Pasteurella multocida (strain Pm70).